We begin with the raw amino-acid sequence, 340 residues long: Uroporphyrinogen decarboxylase (340 aa).

Substrate is bound by residues Arg21 to Arg25, Asp71, Tyr148, Ser203, and His316.

Belongs to the uroporphyrinogen decarboxylase family. As to quaternary structure, homodimer.

The protein resides in the cytoplasm. The enzyme catalyses uroporphyrinogen III + 4 H(+) = coproporphyrinogen III + 4 CO2. It participates in porphyrin-containing compound metabolism; protoporphyrin-IX biosynthesis; coproporphyrinogen-III from 5-aminolevulinate: step 4/4. Its function is as follows. Catalyzes the decarboxylation of four acetate groups of uroporphyrinogen-III to yield coproporphyrinogen-III. This Campylobacter lari (strain RM2100 / D67 / ATCC BAA-1060) protein is Uroporphyrinogen decarboxylase.